Reading from the N-terminus, the 352-residue chain is Protein RecA (352 aa).

Position 67-74 (67-74 (GPESSGKT)) interacts with ATP.

It belongs to the RecA family.

The protein resides in the cytoplasm. Can catalyze the hydrolysis of ATP in the presence of single-stranded DNA, the ATP-dependent uptake of single-stranded DNA by duplex DNA, and the ATP-dependent hybridization of homologous single-stranded DNAs. It interacts with LexA causing its activation and leading to its autocatalytic cleavage. This is Protein RecA from Chlamydia trachomatis serovar A (strain ATCC VR-571B / DSM 19440 / HAR-13).